We begin with the raw amino-acid sequence, 517 residues long: MDIIGGQHLRQMWDDLADVYGHKTALICESSGGVVNRYSYLELNQEINRTANLFYTLGIRKGDKVALHLDNCPEFIFCWFGLAKIGAIMVPINARLLREESTWILQNSQACLLVTSAQFYPMYQQIQQEDASQLRHICLIDMALPADDGVSSFTQLKNQQPATLCYAPPLSTDDTAEILFTSGTTSRPKGVVITHYNLRFAGYYSAWQCALRDDDVYLTVMPAFHIDCQCTAAMAAFSAGATFVLVEKYSARAFWGQVQKYRATITECIPMMIRTLMVQPPSANDRQHRLREVMFYLNLSEQEKDAFCERFGVRLLTSYGMTETIVGIIGDRPGDKRRWPSIGRAGFCYEAEIRDDHNRPLPAGELGEICIKGVPGKTIFKEYFLNPKATAKVLEADGWLHTGDTGYRDEEGFFYFVDRRCNMIKRGGENVSCVELENIIATHPKIQDIVVVGIKDSIRDEAIKAFVVLNEGETLSEEEFFCFCEQNMAKFKVPSYLEIRKDLPRNCSGKIIRKNLK.

The protein belongs to the ATP-dependent AMP-binding enzyme family.

The catalysed reaction is 4-(trimethylamino)butanoate + ATP + CoA = 4-(trimethylamino)butanoyl-CoA + AMP + diphosphate. The enzyme catalyses crotonobetaine + ATP + CoA = crotonobetainyl-CoA + AMP + diphosphate. It carries out the reaction (R)-carnitine + ATP + CoA = (R)-carnitinyl-CoA + AMP + diphosphate. It functions in the pathway amine and polyamine metabolism; carnitine metabolism. Catalyzes the transfer of CoA to carnitine, generating the initial carnitinyl-CoA needed for the CaiB reaction cycle. Also has activity toward crotonobetaine and gamma-butyrobetaine. This is Crotonobetaine/carnitine--CoA ligase from Escherichia coli O1:K1 / APEC.